Consider the following 553-residue polypeptide: Solute carrier family 45 member 3 (553 aa).

11 helical membrane-spanning segments follow: residues 19-39 (LLVN…ITYV), 52-72 (FMTM…PLLG), 88-108 (FIWA…RAGW), 120-140 (LELA…QVCF), 161-181 (YSVY…LPAI), 198-218 (CLFG…LLVA), 275-295 (FVAE…YTDF), 323-343 (MGSL…LVMD), 353-373 (AVYL…CLSH), 382-402 (AALT…LASL), and 522-542 (AYMV…TQVV).

It belongs to the glycoside-pentoside-hexuronide (GPH) cation symporter transporter (TC 2.A.2) family. Prostate specific. Expressed in all prostatic glandular cells. Expressed both in normal and cancerous prostates.

It localises to the membrane. The catalysed reaction is sucrose(out) + H(+)(out) = sucrose(in) + H(+)(in). Functionally, proton-associated sucrose transporter. May be able to transport also glucose and fructose. The sequence is that of Solute carrier family 45 member 3 from Homo sapiens (Human).